Here is a 370-residue protein sequence, read N- to C-terminus: Apolipoprotein A-V (370 aa).

An N-terminal signal peptide occupies residues 1 to 21 (MASMIALLTWALALLPALASA). Position 59 is a phosphoserine (S59).

Belongs to the apolipoprotein A1/A4/E family. In terms of assembly, interacts with GPIHBP1. Interacts with SORL1; this interaction leads to APOA5 internalization and sorting either to lysosomes and degradation, or to the trans-Golgi network.

Its subcellular location is the secreted. The protein resides in the early endosome. It localises to the late endosome. The protein localises to the golgi apparatus. It is found in the trans-Golgi network. In terms of biological role, minor apolipoprotein mainly associated with HDL and to a lesser extent with VLDL. May also be associated with chylomicrons. Important determinant of plasma triglyceride (TG) levels by both being a potent stimulator of apo-CII lipoprotein lipase (LPL) TG hydrolysis and an inhibitor of the hepatic VLDL-TG production rate (without affecting the VLDL-apoB production rate). Activates poorly lecithin:cholesterol acyltransferase (LCAT) and does not enhance efflux of cholesterol from macrophages. Binds heparin. This is Apolipoprotein A-V (APOA5) from Acinonyx jubatus (Cheetah).